The following is a 212-amino-acid chain: Pyridoxine/pyridoxamine 5'-phosphate oxidase (212 aa).

Substrate contacts are provided by residues 8 to 11 (RREY) and Lys-66. Residues 61 to 66 (RIVLLK), 76 to 77 (FT), Arg-82, Lys-83, and Gln-105 each bind FMN. Residues Tyr-123, Arg-127, and Ser-131 each coordinate substrate. FMN is bound by residues 140–141 (QS) and Trp-185. 191 to 193 (RLH) serves as a coordination point for substrate. Position 195 (Arg-195) interacts with FMN.

This sequence belongs to the pyridoxamine 5'-phosphate oxidase family. Homodimer. The cofactor is FMN.

It catalyses the reaction pyridoxamine 5'-phosphate + O2 + H2O = pyridoxal 5'-phosphate + H2O2 + NH4(+). The enzyme catalyses pyridoxine 5'-phosphate + O2 = pyridoxal 5'-phosphate + H2O2. It functions in the pathway cofactor metabolism; pyridoxal 5'-phosphate salvage; pyridoxal 5'-phosphate from pyridoxamine 5'-phosphate: step 1/1. The protein operates within cofactor metabolism; pyridoxal 5'-phosphate salvage; pyridoxal 5'-phosphate from pyridoxine 5'-phosphate: step 1/1. In terms of biological role, catalyzes the oxidation of either pyridoxine 5'-phosphate (PNP) or pyridoxamine 5'-phosphate (PMP) into pyridoxal 5'-phosphate (PLP). The protein is Pyridoxine/pyridoxamine 5'-phosphate oxidase of Shewanella sp. (strain W3-18-1).